A 327-amino-acid chain; its full sequence is Aspartate--ammonia ligase (327 aa).

It belongs to the class-II aminoacyl-tRNA synthetase family. AsnA subfamily.

The protein resides in the cytoplasm. It catalyses the reaction L-aspartate + NH4(+) + ATP = L-asparagine + AMP + diphosphate + H(+). The protein operates within amino-acid biosynthesis; L-asparagine biosynthesis; L-asparagine from L-aspartate (ammonia route): step 1/1. The sequence is that of Aspartate--ammonia ligase from Bacillus cereus (strain AH187).